We begin with the raw amino-acid sequence, 93 residues long: Translation initiation factor IF-1 (93 aa).

One can recognise an S1-like domain in the interval 1 to 72; it reads MAKEELIQFE…EKGRLIFRHK (72 aa). A disordered region spans residues 69–93; sequence FRHKDERPSGAPRGGPPRGGQFRRR.

It belongs to the IF-1 family. Component of the 30S ribosomal translation pre-initiation complex which assembles on the 30S ribosome in the order IF-2 and IF-3, IF-1 and N-formylmethionyl-tRNA(fMet); mRNA recruitment can occur at any time during PIC assembly.

Its subcellular location is the cytoplasm. One of the essential components for the initiation of protein synthesis. Stabilizes the binding of IF-2 and IF-3 on the 30S subunit to which N-formylmethionyl-tRNA(fMet) subsequently binds. Helps modulate mRNA selection, yielding the 30S pre-initiation complex (PIC). Upon addition of the 50S ribosomal subunit IF-1, IF-2 and IF-3 are released leaving the mature 70S translation initiation complex. In Nitrobacter hamburgensis (strain DSM 10229 / NCIMB 13809 / X14), this protein is Translation initiation factor IF-1.